The following is a 461-amino-acid chain: MENLTPRQIVEYLDKYIIGQEAAKKAVAVALRNRYRRKLLPPHLKDEIIPKNILMIGPTGVGKTEIARRLAKLIKAPFVKVEATKFTEVGYVGRDVEGMIRDLVETSLRMVREEKIKMVEDKAYNLAVERLSEIMIPNPKKENIKNPFEMFFGGIREDAAKTDPAYDELNYRRRELQDKIKKGFLDNEMVEIEVEEQKTPMVEVFGVGGIEEMGLNFQDILGGLIPPRRKKRRVTVKEALKILTQQEAQKLIDMDEVQREAIKRAEEDGIVFLDEIDKIASTGNTHGPDVSRGGVQRDILPIVEGSTVLTKYGPVKTDHILFIAAGAFHMSKPSDLIPELQGRFPIRVELKSLTVEDFKKILTVPENALTKQYVELLATEGVNLKFTEDSLEEIAKMAYTVNERNENIGARRLITILEKVLEDLSFNAPEMWGQTVVIDRKFVQDKLSEIVHDSDLSRYIL.

ATP contacts are provided by residues Ile18, 60-65, Asp274, Glu339, and Arg411; that span reads GVGKTE.

It belongs to the ClpX chaperone family. HslU subfamily. A double ring-shaped homohexamer of HslV is capped on each side by a ring-shaped HslU homohexamer. The assembly of the HslU/HslV complex is dependent on binding of ATP.

It is found in the cytoplasm. ATPase subunit of a proteasome-like degradation complex; this subunit has chaperone activity. The binding of ATP and its subsequent hydrolysis by HslU are essential for unfolding of protein substrates subsequently hydrolyzed by HslV. HslU recognizes the N-terminal part of its protein substrates and unfolds these before they are guided to HslV for hydrolysis. The sequence is that of ATP-dependent protease ATPase subunit HslU from Carboxydothermus hydrogenoformans (strain ATCC BAA-161 / DSM 6008 / Z-2901).